Consider the following 420-residue polypeptide: Dynein axonemal assembly factor 4 (420 aa).

Positions leucine 3–serine 87 constitute a CS domain. The tract at residues aspartate 7–serine 103 is mediates interaction with ESR1 and STUB1. 3 TPR repeats span residues proline 290–methionine 323, proline 324–proline 357, and methionine 366–asparagine 399.

In terms of assembly, interacts with ZMYND10. Interacts with STUB1. Interacts with ESR1 and ESR2. Interacts with DNAAF2. Interacts with CCT3, CCT4, CCT5 and CCT8. Interacts with DNAAF6/PIH1D3.

It localises to the nucleus. Its subcellular location is the cytoplasm. It is found in the cell projection. The protein localises to the neuron projection. The protein resides in the dynein axonemal particle. In terms of biological role, involved in neuronal migration during development of the cerebral neocortex. May regulate the stability and proteasomal degradation of the estrogen receptors that play an important role in neuronal differentiation, survival and plasticity. Axonemal dynein assembly factor required for ciliary motility. The polypeptide is Dynein axonemal assembly factor 4 (Pan troglodytes (Chimpanzee)).